Reading from the N-terminus, the 312-residue chain is Ornithine carbamoyltransferase (312 aa).

Residues 50 to 53 (STRT), Q77, R101, and 128 to 131 (HPCQ) contribute to the carbamoyl phosphate site. Residues N159, D223, and 227–228 (SM) contribute to the L-ornithine site. Carbamoyl phosphate-binding positions include 263 to 264 (CL) and R291.

This sequence belongs to the aspartate/ornithine carbamoyltransferase superfamily. OTCase family.

It localises to the cytoplasm. The catalysed reaction is carbamoyl phosphate + L-ornithine = L-citrulline + phosphate + H(+). It functions in the pathway amino-acid biosynthesis; L-arginine biosynthesis; L-arginine from L-ornithine and carbamoyl phosphate: step 1/3. Functionally, reversibly catalyzes the transfer of the carbamoyl group from carbamoyl phosphate (CP) to the N(epsilon) atom of ornithine (ORN) to produce L-citrulline. The chain is Ornithine carbamoyltransferase from Acidothermus cellulolyticus (strain ATCC 43068 / DSM 8971 / 11B).